A 400-amino-acid polypeptide reads, in one-letter code: Protein transport protein HofC homolog (400 aa).

The next 3 helical transmembrane spans lie at 165–185 (YPII…HFVL), 209–229 (LADF…LLAI), and 370–390 (LLII…LPIF).

This sequence belongs to the GSP F family.

It localises to the cell inner membrane. The protein is Protein transport protein HofC homolog (hofC) of Escherichia coli (strain K12).